Reading from the N-terminus, the 198-residue chain is Probable nicotinate-nucleotide adenylyltransferase (198 aa).

This sequence belongs to the NadD family.

It catalyses the reaction nicotinate beta-D-ribonucleotide + ATP + H(+) = deamido-NAD(+) + diphosphate. Its pathway is cofactor biosynthesis; NAD(+) biosynthesis; deamido-NAD(+) from nicotinate D-ribonucleotide: step 1/1. Catalyzes the reversible adenylation of nicotinate mononucleotide (NaMN) to nicotinic acid adenine dinucleotide (NaAD). In Albidiferax ferrireducens (strain ATCC BAA-621 / DSM 15236 / T118) (Rhodoferax ferrireducens), this protein is Probable nicotinate-nucleotide adenylyltransferase.